Consider the following 285-residue polypeptide: VQ motif-containing protein 20 (285 aa).

The segment covering Met1–Pro10 has biased composition (basic and acidic residues). Residues Met1–Ala68 form a disordered region. Residues Tyr11–Lys23 are compositionally biased toward basic residues. The VQ motif lies at Phe91–Gly100. The disordered stretch occupies residues Tyr195 to Tyr218. A compositionally biased stretch (pro residues) spans Pro201–Ser216.

The protein localises to the nucleus. In terms of biological role, may function as negative regulator of plant defense. This chain is VQ motif-containing protein 20, found in Arabidopsis thaliana (Mouse-ear cress).